Here is a 1234-residue protein sequence, read N- to C-terminus: PAN2-PAN3 deadenylation complex catalytic subunit PAN2 (1234 aa).

The tract at residues 12 to 32 (LKNSNNNSNSNSSSNNSSNGV) is disordered. Residues 14-30 (NSNNNSNSNSSSNNSSN) are compositionally biased toward low complexity. 3 WD repeats span residues 176–213 (NHTG…SIKT), 272–315 (AFPA…VYHA), and 342–381 (QQQP…TLSK). Positions 323–346 (PLPPAGSSAAQQQKQQQQQQQQPH) are disordered. Residues 333–344 (QQQKQQQQQQQQ) show a composition bias toward low complexity. Positions 383 to 537 (FVNFPQEIER…DSIFQCQNDE (155 aa)) are linker. Residues 538–946 (KIPNCYSRLQ…KPVIVIYQEV (409 aa)) enclose the USP domain. The interval 751–775 (PNTQQDQQQQQQQQQQQQQQQQPTN) is disordered. A compositionally biased stretch (low complexity) spans 754–772 (QQDQQQQQQQQQQQQQQQQ). A divalent metal cation-binding residues include aspartate 1004, glutamate 1006, aspartate 1138, and aspartate 1191. The Exonuclease domain maps to 1072–1199 (GEAFIDDYIV…EDARTALLLY (128 aa)).

The protein belongs to the peptidase C19 family. PAN2 subfamily. As to quaternary structure, forms a heterotrimer with an asymmetric homodimer of the regulatory subunit PAN3 to form the poly(A)-nuclease (PAN) deadenylation complex. It depends on a divalent metal cation as a cofactor.

The protein localises to the cytoplasm. The enzyme catalyses Exonucleolytic cleavage of poly(A) to 5'-AMP.. Its activity is regulated as follows. Positively regulated by the regulatory subunit PAN3. Its function is as follows. Catalytic subunit of the poly(A)-nuclease (PAN) deadenylation complex, one of two cytoplasmic mRNA deadenylases involved in mRNA turnover. PAN specifically shortens poly(A) tails of RNA and the activity is stimulated by poly(A)-binding protein PAB1. PAN deadenylation is followed by rapid degradation of the shortened mRNA tails by the CCR4-NOT complex. Deadenylated mRNAs are then degraded by two alternative mechanisms, namely exosome-mediated 3'-5' exonucleolytic degradation, or deadenylation-dependent mRNA decaping and subsequent 5'-3' exonucleolytic degradation by XRN1. May also be involved in post-transcriptional maturation of mRNA poly(A) tails. This Lodderomyces elongisporus (strain ATCC 11503 / CBS 2605 / JCM 1781 / NBRC 1676 / NRRL YB-4239) (Yeast) protein is PAN2-PAN3 deadenylation complex catalytic subunit PAN2.